A 172-amino-acid chain; its full sequence is Myosin regulatory light chain (172 aa).

Residue T17 is modified to Phosphothreonine. S18 is modified (phosphoserine). EF-hand domains are found at residues 27–62 (AQIQEFKEAFNMIDQNRDGFIDQEDLKDMFASLGKE), 98–133 (DPEEVIRNAFQCFDEDNSGKLNEEHLRELLTTMGER), and 134–168 (YSEEQVDELFRDAPIKGGQFDYVEFTRMLKHGTKD). 4 residues coordinate Ca(2+): D40, N42, D44, and D51.

Myosin is a hexamer of 2 heavy chains and 4 light chains (two regulatory light chains and two essential light chains). Post-translationally, may be phosphorylated by let-502 or/and pak-1 and dephosphorylated by mel-11 to regulate its activation and myosin II-mediated contraction. Expressed in the spermathecal and uterine walls. Weak expression in gonadal sheath and intestinal muscle. Not detected in vulval, pharyngeal or body wall muscles.

It localises to the cytoplasm. The protein localises to the cytoskeleton. Functionally, regulates myosin II activity and organization during embryo elongation. May be involved in the organization of mlc-5 into bundles. Required maternally for cytokinesis during meiosis and mitosis in the early embryo and for the establishment of embryonic anterior-posterior polarity. The chain is Myosin regulatory light chain from Caenorhabditis elegans.